The primary structure comprises 329 residues: DGAT1/2-independent enzyme synthesizing storage lipids (329 aa).

The Lumenal portion of the chain corresponds to 1–50 (MIDNNQTCAAGQDSVPYVTCMIYVLEEWLGVEQLEDYLNFANHLLWVFTP). Asn5 carries an N-linked (GlcNAc...) asparagine glycan. A helical membrane pass occupies residues 51-71 (LILLILPYFTIFLLYLTIIFL). Residues 72 to 120 (HIYKRKNVLKEAYSHNLWDGARKTVATLWDGHAAVWHGYEVHGMEKIPE) lie on the Cytoplasmic side of the membrane. Residues 121-141 (GAALIIFYHGAIPIDFYYFMA) form a helical membrane-spanning segment. His129 is a catalytic residue. Topologically, residues 142 to 329 (KIFIQKGRTC…DRFHKEQKAH (188 aa)) are lumenal.

This sequence belongs to the diacylglycerol acyltransferase family. Highly divergent. Widely expressed, with highest level in the brain, followed by lung and duodenum, and lowest levels in tongue, testis, skin and ileum.

Its subcellular location is the endoplasmic reticulum membrane. It catalyses the reaction a 1,2-diacylglycerol + a 1,2-diacyl-sn-glycero-3-phosphocholine = a triacylglycerol + a 1-acyl-sn-glycero-3-phosphocholine. The enzyme catalyses a 1-O-alkyl-2-acyl-sn-glycero-3-phosphocholine + a 1,2-diacylglycerol = a 1-O-alkyl-sn-glycero-3-phosphocholine + a triacylglycerol. The catalysed reaction is a 2-acylglycerol + an acyl-CoA = a 1,2-diacylglycerol + CoA. It carries out the reaction an acyl-CoA + a 1,2-diacyl-sn-glycerol = a triacyl-sn-glycerol + CoA. It catalyses the reaction 2-(9Z-octadecenoyl)-glycerol + (9Z)-octadecenoyl-CoA = 1,2-di-(9Z-octadecenoyl)-glycerol + CoA. The enzyme catalyses 1,2-di-(9Z-octadecenoyl)-sn-glycerol + (9Z)-octadecenoyl-CoA = 1,2,3-tri-(9Z-octadecenoyl)-glycerol + CoA. Acyltransferase activity is specifically inhibited by TMX1 at the endoplasmic reticulum, restricting accumulation of triacylglycerol. In terms of biological role, catalytic subunit of the alternative triglyceride biosynthesis pathway, which mediates formation of triacylglycerol from diacylglycerol and membrane phospholipids. Synthesizes triacylglycerol at the expense of membrane phospholipids, such as phosphatidylcholine (PC) and its ether-linked form (ePC), thereby altering the composition of membranes. The alternative triglyceride biosynthesis pathway is probably required to provide the energy required for rapid growth when fuel sources are limiting. It maintains mitochondrial function during periods of extracellular lipid starvation. Can also use acyl-CoA as donor: acts as a acyl-CoA:monoacylglycerol acyltransferase (MGAT), but also shows acyl-CoA:diacylglycerol acyltransferase (DGAT) activity. The protein is DGAT1/2-independent enzyme synthesizing storage lipids of Mus musculus (Mouse).